The chain runs to 124 residues: UPF0102 protein Noca_3248 (124 aa).

The protein belongs to the UPF0102 family.

The chain is UPF0102 protein Noca_3248 from Nocardioides sp. (strain ATCC BAA-499 / JS614).